A 95-amino-acid polypeptide reads, in one-letter code: Co-chaperonin GroES (95 aa).

Belongs to the GroES chaperonin family. In terms of assembly, heptamer of 7 subunits arranged in a ring. Interacts with the chaperonin GroEL.

It is found in the cytoplasm. Together with the chaperonin GroEL, plays an essential role in assisting protein folding. The GroEL-GroES system forms a nano-cage that allows encapsulation of the non-native substrate proteins and provides a physical environment optimized to promote and accelerate protein folding. GroES binds to the apical surface of the GroEL ring, thereby capping the opening of the GroEL channel. The chain is Co-chaperonin GroES from Glaesserella parasuis serovar 5 (strain SH0165) (Haemophilus parasuis).